The following is a 961-amino-acid chain: Probable exosome complex exonuclease RRP44 (961 aa).

A PINc domain is found at 73 to 188; it reads HALIVDSTSL…LVFDEDSKKR (116 aa). The 107-residue stretch at 232–338 folds into the CSD1 domain; the sequence is IFDEYLSHDR…DEENDDENDE (107 aa). Residues 322–346 are disordered; the sequence is ADDMGNEDEENDDENDEPKAKKSKK. Positions 325 to 337 are enriched in acidic residues; it reads MGNEDEENDDEND. The region spanning 381-447 is the CSD2 domain; it reads LFCPAERLIP…ENEVLLLEHD (67 aa). Positions 479–809 constitute an RNB domain; the sequence is RVDLRDLTIC…IVHRLLAAAI (331 aa).

This sequence belongs to the RNR ribonuclease family. In terms of assembly, component of the RNA exosome complex. In terms of tissue distribution, ubiquitously expressed.

Its subcellular location is the nucleus. It is found in the nucleoplasm. In terms of biological role, putative catalytic component of the RNA exosome complex which has 3'-&gt;5' exoribonuclease activity and participates in a multitude of cellular RNA processing and degradation events. Has both 3'-5' exonuclease and endonuclease activities. Involved in regulation of antisense ribosomal siRNA production. This chain is Probable exosome complex exonuclease RRP44 (dis-3), found in Caenorhabditis elegans.